A 158-amino-acid chain; its full sequence is Crossover junction endodeoxyribonuclease RuvC (158 aa).

Residues Asp-7, Glu-66, and Asp-139 contribute to the active site. Mg(2+)-binding residues include Asp-7, Glu-66, and Asp-139.

Belongs to the RuvC family. In terms of assembly, homodimer which binds Holliday junction (HJ) DNA. The HJ becomes 2-fold symmetrical on binding to RuvC with unstacked arms; it has a different conformation from HJ DNA in complex with RuvA. In the full resolvosome a probable DNA-RuvA(4)-RuvB(12)-RuvC(2) complex forms which resolves the HJ. The cofactor is Mg(2+).

It localises to the cytoplasm. It catalyses the reaction Endonucleolytic cleavage at a junction such as a reciprocal single-stranded crossover between two homologous DNA duplexes (Holliday junction).. Functionally, the RuvA-RuvB-RuvC complex processes Holliday junction (HJ) DNA during genetic recombination and DNA repair. Endonuclease that resolves HJ intermediates. Cleaves cruciform DNA by making single-stranded nicks across the HJ at symmetrical positions within the homologous arms, yielding a 5'-phosphate and a 3'-hydroxyl group; requires a central core of homology in the junction. The consensus cleavage sequence is 5'-(A/T)TT(C/G)-3'. Cleavage occurs on the 3'-side of the TT dinucleotide at the point of strand exchange. HJ branch migration catalyzed by RuvA-RuvB allows RuvC to scan DNA until it finds its consensus sequence, where it cleaves and resolves the cruciform DNA. This chain is Crossover junction endodeoxyribonuclease RuvC, found in Carboxydothermus hydrogenoformans (strain ATCC BAA-161 / DSM 6008 / Z-2901).